The chain runs to 210 residues: Large ribosomal subunit protein uL3 (210 aa).

Positions 119–143 (GYQGNIKKDGQSRGPMAHGSRYHRR) are disordered.

Belongs to the universal ribosomal protein uL3 family. In terms of assembly, part of the 50S ribosomal subunit. Forms a cluster with proteins L14 and L19.

One of the primary rRNA binding proteins, it binds directly near the 3'-end of the 23S rRNA, where it nucleates assembly of the 50S subunit. This is Large ribosomal subunit protein uL3 from Lacticaseibacillus casei (strain BL23) (Lactobacillus casei).